The chain runs to 207 residues: Holliday junction branch migration complex subunit RuvA (207 aa).

The domain I stretch occupies residues 1 to 64 (MIGRLRGNLL…EDAQLLYGFN (64 aa)). The tract at residues 65 to 143 (TKNERALFRE…GWGAGDLFTP (79 aa)) is domain II. The flexible linker stretch occupies residues 144 to 158 (ATDAAPMDDGSEFIT). The tract at residues 159–207 (SPQSAVDEAVSALIALGYKPQQASKTVSQVAKPDMTSEVLIRESLKSMI) is domain III.

This sequence belongs to the RuvA family. Homotetramer. Forms an RuvA(8)-RuvB(12)-Holliday junction (HJ) complex. HJ DNA is sandwiched between 2 RuvA tetramers; dsDNA enters through RuvA and exits via RuvB. An RuvB hexamer assembles on each DNA strand where it exits the tetramer. Each RuvB hexamer is contacted by two RuvA subunits (via domain III) on 2 adjacent RuvB subunits; this complex drives branch migration. In the full resolvosome a probable DNA-RuvA(4)-RuvB(12)-RuvC(2) complex forms which resolves the HJ.

It is found in the cytoplasm. In terms of biological role, the RuvA-RuvB-RuvC complex processes Holliday junction (HJ) DNA during genetic recombination and DNA repair, while the RuvA-RuvB complex plays an important role in the rescue of blocked DNA replication forks via replication fork reversal (RFR). RuvA specifically binds to HJ cruciform DNA, conferring on it an open structure. The RuvB hexamer acts as an ATP-dependent pump, pulling dsDNA into and through the RuvAB complex. HJ branch migration allows RuvC to scan DNA until it finds its consensus sequence, where it cleaves and resolves the cruciform DNA. This is Holliday junction branch migration complex subunit RuvA from Aliivibrio fischeri (strain MJ11) (Vibrio fischeri).